A 260-amino-acid polypeptide reads, in one-letter code: Ribonuclease HII (260 aa).

Residues 71–259 (ELVAGVDEVG…VHDAIVNKKN (189 aa)) enclose the RNase H type-2 domain. A divalent metal cation contacts are provided by D77, E78, and D169.

This sequence belongs to the RNase HII family. Requires Mn(2+) as cofactor. The cofactor is Mg(2+).

It localises to the cytoplasm. The catalysed reaction is Endonucleolytic cleavage to 5'-phosphomonoester.. In terms of biological role, endonuclease that specifically degrades the RNA of RNA-DNA hybrids. The sequence is that of Ribonuclease HII from Leuconostoc citreum (strain KM20).